We begin with the raw amino-acid sequence, 596 residues long: V-type ATP synthase alpha chain (596 aa).

ATP is bound at residue 233–240 (GPFGAGKT).

The protein belongs to the ATPase alpha/beta chains family.

The catalysed reaction is ATP + H2O + 4 H(+)(in) = ADP + phosphate + 5 H(+)(out). Functionally, produces ATP from ADP in the presence of a proton gradient across the membrane. The V-type alpha chain is a catalytic subunit. This is V-type ATP synthase alpha chain from Streptococcus gordonii (strain Challis / ATCC 35105 / BCRC 15272 / CH1 / DL1 / V288).